Here is a 158-residue protein sequence, read N- to C-terminus: 6,7-dimethyl-8-ribityllumazine synthase (158 aa).

5-amino-6-(D-ribitylamino)uracil is bound by residues phenylalanine 22, 57 to 59 (AVE), and 81 to 83 (AVI). (2S)-2-hydroxy-3-oxobutyl phosphate is bound at residue 86-87 (GT). The active-site Proton donor is the histidine 89. Position 114 (phenylalanine 114) interacts with 5-amino-6-(D-ribitylamino)uracil. Position 128 (arginine 128) interacts with (2S)-2-hydroxy-3-oxobutyl phosphate.

The protein belongs to the DMRL synthase family. As to quaternary structure, forms an icosahedral capsid composed of 60 subunits, arranged as a dodecamer of pentamers.

The enzyme catalyses (2S)-2-hydroxy-3-oxobutyl phosphate + 5-amino-6-(D-ribitylamino)uracil = 6,7-dimethyl-8-(1-D-ribityl)lumazine + phosphate + 2 H2O + H(+). Its pathway is cofactor biosynthesis; riboflavin biosynthesis; riboflavin from 2-hydroxy-3-oxobutyl phosphate and 5-amino-6-(D-ribitylamino)uracil: step 1/2. Functionally, catalyzes the formation of 6,7-dimethyl-8-ribityllumazine by condensation of 5-amino-6-(D-ribitylamino)uracil with 3,4-dihydroxy-2-butanone 4-phosphate. This is the penultimate step in the biosynthesis of riboflavin. In Shewanella piezotolerans (strain WP3 / JCM 13877), this protein is 6,7-dimethyl-8-ribityllumazine synthase.